Consider the following 408-residue polypeptide: Argininosuccinate synthase (408 aa).

ATP is bound at residue 8–16 (AYSGGLDTS). Tyr-86 serves as a coordination point for L-citrulline. Residue Gly-116 coordinates ATP. Thr-118, Asn-122, and Asp-123 together coordinate L-aspartate. L-citrulline is bound at residue Asn-122. The L-citrulline site is built by Arg-126, Ser-174, Glu-259, and Tyr-271.

This sequence belongs to the argininosuccinate synthase family. Type 1 subfamily. In terms of assembly, homotetramer.

The protein localises to the cytoplasm. The catalysed reaction is L-citrulline + L-aspartate + ATP = 2-(N(omega)-L-arginino)succinate + AMP + diphosphate + H(+). It participates in amino-acid biosynthesis; L-arginine biosynthesis; L-arginine from L-ornithine and carbamoyl phosphate: step 2/3. The protein is Argininosuccinate synthase of Leuconostoc mesenteroides subsp. mesenteroides (strain ATCC 8293 / DSM 20343 / BCRC 11652 / CCM 1803 / JCM 6124 / NCDO 523 / NBRC 100496 / NCIMB 8023 / NCTC 12954 / NRRL B-1118 / 37Y).